Here is a 127-residue protein sequence, read N- to C-terminus: Protein ApaG (127 aa).

The ApaG domain maps to 3-127 (ESEKYRIEVE…FMLAMPRVLH (125 aa)).

The sequence is that of Protein ApaG from Aromatoleum aromaticum (strain DSM 19018 / LMG 30748 / EbN1) (Azoarcus sp. (strain EbN1)).